The following is a 350-amino-acid chain: MLEQLQTLKSEAETQINEASDLKTLNDLRVKYLGKKGPMTEIMKQMGKLSAEERPKMGSLANEVRTALTEAISSKQQILETEAINEKLKSETIDVTLPGTAPSIGTKHLLTQVIEEMEDMFIGMGYEIAEGPEVELDYYNFEALNLPKDHPARDMQDSFYITENTLLRTQTSPVQARTMEKHDFSKGPIKVICPGKVYRRDNDDATHSHQFTQIEGLVVGENITFADLKGTLTVLAKTMFGEEREIRLRPSFFPFTEPSVEMDISCFKCGGKGCRVCKGTGWIEILGSGMVHPNVLEMSGIDSTRYSGFAFGLGPERVAMLKYAVDDIRHLYTNDLRFTKQFQSTETGEI.

Mg(2+) is bound at residue Glu257.

It belongs to the class-II aminoacyl-tRNA synthetase family. Phe-tRNA synthetase alpha subunit type 1 subfamily. In terms of assembly, tetramer of two alpha and two beta subunits. It depends on Mg(2+) as a cofactor.

The protein resides in the cytoplasm. The catalysed reaction is tRNA(Phe) + L-phenylalanine + ATP = L-phenylalanyl-tRNA(Phe) + AMP + diphosphate + H(+). This Listeria monocytogenes serovar 1/2a (strain ATCC BAA-679 / EGD-e) protein is Phenylalanine--tRNA ligase alpha subunit.